Consider the following 541-residue polypeptide: Eukaryotic translation initiation factor 3 subunit D-1 (541 aa).

The tract at residues 98–136 (VQKPPHQRGRFRNMRGRGGRGRNPRGGLNNHHHHGMTTL) is disordered. A compositionally biased stretch (basic residues) spans 100–120 (KPPHQRGRFRNMRGRGGRGRN).

This sequence belongs to the eIF-3 subunit D family. Component of the eukaryotic translation initiation factor 3 (eIF-3) complex. The eIF-3 complex interacts with pix.

The protein resides in the cytoplasm. MRNA cap-binding component of the eukaryotic translation initiation factor 3 (eIF-3) complex, which is involved in protein synthesis of a specialized repertoire of mRNAs and, together with other initiation factors, stimulates binding of mRNA and methionyl-tRNAi to the 40S ribosome. The eIF-3 complex specifically targets and initiates translation of a subset of mRNAs involved in cell proliferation. In the eIF-3 complex, eif3d specifically recognizes and binds the 7-methylguanosine cap of a subset of mRNAs. This is Eukaryotic translation initiation factor 3 subunit D-1 from Drosophila persimilis (Fruit fly).